Reading from the N-terminus, the 121-residue chain is Flagellar hook-basal body complex protein FliE (121 aa).

It belongs to the FliE family.

It localises to the bacterial flagellum basal body. In Saccharophagus degradans (strain 2-40 / ATCC 43961 / DSM 17024), this protein is Flagellar hook-basal body complex protein FliE.